A 215-amino-acid polypeptide reads, in one-letter code: MKLILLILTAYLLGSIPTGLWIGQYFYNINLREHGSGNTGTTNTFRILGLKAGAATLLIDIFKGTLATLLPVLVGASNISPITIGFFAVLGHTFPIFAGFKGGKAVATSAGVLLGFAPLYLLFLAAVFVLTLYLFSMISLASLTASVVAVISVLTFPAAHFLLPSYDWLLTITIVVLAAIIILRHQDNMKRIKQQSENLIPWGLNLSKQQPASHH.

Transmembrane regions (helical) follow at residues 3–23, 42–61, 68–90, 110–130, 134–154, and 162–182; these read LILLILTAYLLGSIPTGLWIG, TNTFRILGLKAGAATLLIDI, TLLPVLVGASNISPITIGFFAVL, AGVLLGFAPLYLLFLAAVFVL, LFSMISLASLTASVVAVISVL, and LLPSYDWLLTITIVVLAAIII.

Belongs to the PlsY family. In terms of assembly, probably interacts with PlsX.

The protein resides in the cell membrane. The enzyme catalyses an acyl phosphate + sn-glycerol 3-phosphate = a 1-acyl-sn-glycero-3-phosphate + phosphate. It participates in lipid metabolism; phospholipid metabolism. Catalyzes the transfer of an acyl group from acyl-phosphate (acyl-PO(4)) to glycerol-3-phosphate (G3P) to form lysophosphatidic acid (LPA). This enzyme utilizes acyl-phosphate as fatty acyl donor, but not acyl-CoA or acyl-ACP. The chain is Glycerol-3-phosphate acyltransferase from Streptococcus equi subsp. equi (strain 4047).